Consider the following 107-residue polypeptide: Antimicrobial peptide damicornin (107 aa).

The N-terminal stretch at 1–22 (MKVLVILFGAMLVLMEFQKASA) is a signal peptide. The propeptide occupies 23–67 (ATLLEDFDDDDDLLDDGGDFDLEANSDASSGNGNDSNDAVPEKRR). The segment covering 37–46 (DDGGDFDLEA) has biased composition (acidic residues). Residues 37–62 (DDGGDFDLEANSDASSGNGNDSNDAV) form a disordered region. The span at 47–61 (NSDASSGNGNDSNDA) shows a compositional bias: low complexity. 3 cysteine pairs are disulfide-bonded: C69/C105, C78/C99, and C85/C103. R106 is modified (arginine amide).

Belongs to the coral AMP family. In terms of tissue distribution, is specifically expressed in the granular cells of the ectoderm.

The protein localises to the cytoplasm. The protein resides in the stress granule. It localises to the secreted. Functionally, cationic peptide with probable antimicrobial activity against coral pathogens. Shows in vitro activity against Gram-positive bacteria and the filamentous fungus F.oxysporum (MIC=1.25 uM). Gram-positive bacteria tested are B.megaterium (MIC=20 uM), S.aureus (MIC=5 uM), M. luteus (MIC=1.25 uM), B.stationis (MIC=10 uM), M.maritypicum (MIC=20 uM). Has no or little effect against Gram-negative bacteria (the coral pathogen V.coralliilyticus (MIC&gt;20 uM), V.aesturianus (MIC&gt;20 uM), V.shiloi (MIC&gt;20 uM), and E.coli (MIC=10 uM)). Has no hemolytic activity against sheep erythrocytes. In Pocillopora damicornis (Cauliflower coral), this protein is Antimicrobial peptide damicornin.